The primary structure comprises 311 residues: tRNA-cytidine(32) 2-sulfurtransferase (311 aa).

Positions 47 to 52 (SGGKDS) match the PP-loop motif motif. Residues cysteine 122, cysteine 125, and cysteine 213 each contribute to the [4Fe-4S] cluster site.

The protein belongs to the TtcA family. As to quaternary structure, homodimer. Mg(2+) is required as a cofactor. [4Fe-4S] cluster serves as cofactor.

It is found in the cytoplasm. The catalysed reaction is cytidine(32) in tRNA + S-sulfanyl-L-cysteinyl-[cysteine desulfurase] + AH2 + ATP = 2-thiocytidine(32) in tRNA + L-cysteinyl-[cysteine desulfurase] + A + AMP + diphosphate + H(+). It functions in the pathway tRNA modification. Its function is as follows. Catalyzes the ATP-dependent 2-thiolation of cytidine in position 32 of tRNA, to form 2-thiocytidine (s(2)C32). The sulfur atoms are provided by the cysteine/cysteine desulfurase (IscS) system. The sequence is that of tRNA-cytidine(32) 2-sulfurtransferase from Salmonella paratyphi A (strain ATCC 9150 / SARB42).